We begin with the raw amino-acid sequence, 314 residues long: Ribosomal protein L11 methyltransferase (314 aa).

Positions 166, 187, 209, and 251 each coordinate S-adenosyl-L-methionine.

Belongs to the methyltransferase superfamily. PrmA family.

It localises to the cytoplasm. It carries out the reaction L-lysyl-[protein] + 3 S-adenosyl-L-methionine = N(6),N(6),N(6)-trimethyl-L-lysyl-[protein] + 3 S-adenosyl-L-homocysteine + 3 H(+). Functionally, methylates ribosomal protein L11. The polypeptide is Ribosomal protein L11 methyltransferase (Clostridium tetani (strain Massachusetts / E88)).